The following is a 402-amino-acid chain: Imidazolonepropionase (402 aa).

Fe(3+)-binding residues include His66 and His68. Residues His66 and His68 each contribute to the Zn(2+) site. 3 residues coordinate 4-imidazolone-5-propanoate: Arg75, Tyr138, and His171. Tyr138 contacts N-formimidoyl-L-glutamate. Fe(3+) is bound at residue His236. A Zn(2+)-binding site is contributed by His236. Position 239 (Gln239) interacts with 4-imidazolone-5-propanoate. Asp311 serves as a coordination point for Fe(3+). Asp311 lines the Zn(2+) pocket. Asn313 and Gly315 together coordinate N-formimidoyl-L-glutamate. Thr316 provides a ligand contact to 4-imidazolone-5-propanoate.

Belongs to the metallo-dependent hydrolases superfamily. HutI family. Zn(2+) is required as a cofactor. The cofactor is Fe(3+).

The protein localises to the cytoplasm. The catalysed reaction is 4-imidazolone-5-propanoate + H2O = N-formimidoyl-L-glutamate. It participates in amino-acid degradation; L-histidine degradation into L-glutamate; N-formimidoyl-L-glutamate from L-histidine: step 3/3. Its function is as follows. Catalyzes the hydrolytic cleavage of the carbon-nitrogen bond in imidazolone-5-propanoate to yield N-formimidoyl-L-glutamate. It is the third step in the universal histidine degradation pathway. This Pseudomonas aeruginosa (strain ATCC 15692 / DSM 22644 / CIP 104116 / JCM 14847 / LMG 12228 / 1C / PRS 101 / PAO1) protein is Imidazolonepropionase.